A 1383-amino-acid polypeptide reads, in one-letter code: DNA-directed RNA polymerase subunit beta (1383 aa).

The protein belongs to the RNA polymerase beta chain family. The RNAP catalytic core consists of 2 alpha, 1 beta, 1 beta' and 1 omega subunit. When a sigma factor is associated with the core the holoenzyme is formed, which can initiate transcription.

The enzyme catalyses RNA(n) + a ribonucleoside 5'-triphosphate = RNA(n+1) + diphosphate. Functionally, DNA-dependent RNA polymerase catalyzes the transcription of DNA into RNA using the four ribonucleoside triphosphates as substrates. The sequence is that of DNA-directed RNA polymerase subunit beta from Xanthomonas euvesicatoria pv. vesicatoria (strain 85-10) (Xanthomonas campestris pv. vesicatoria).